The primary structure comprises 205 residues: Max-like protein homolog 2 (205 aa).

2 stretches are compositionally biased toward low complexity: residues 1 to 12 (MSRSRSAAASSS) and 26 to 40 (SASSPSAPNTPATNS). A disordered region spans residues 1-58 (MSRSRSAAASSSQKPDDMDLMSPDGSASSPSAPNTPATNSGGFSSDRKKATHLRCERQ). Positions 45–58 (SDRKKATHLRCERQ) are enriched in basic and acidic residues. Positions 47–60 (RKKATHLRCERQRR) are basic motif. A bHLH domain is found at 47 to 101 (RKKATHLRCERQRREAINSGYSDLKDLIPQTTTSLGCKTTNAAILFRACDFMSQL). A helix-loop-helix motif region spans residues 61-101 (EAINSGYSDLKDLIPQTTTSLGCKTTNAAILFRACDFMSQL). Positions 98–132 (MSQLKTDISDADKQLAQLNAQAAALEMIASEYEQM) form a coiled coil.

In terms of tissue distribution, widely expressed.

It is found in the nucleus. The protein resides in the cytoplasm. It localises to the mitochondrion. Transcription factor. Binds to the E box motif 5'-CACGTG-3', probably in a heterodimeric complex with mml-1. Involved in modulating longevity in response to TOR signaling, dietary restriction, the decline in protein homeostasis associated with normal aging, germline signaling and the insulin-like signaling pathway. Plays a role in autophagy. Involved in regulating migration of the ray 1 precursor cells in the male tail, acting in concert with Wnt and semaphorin signaling pathways. Regulates transcription of genes encoding extracellular matrix (ECM) components which may contribute to the substratum required for migration of the neighboring ray 1 precursor cells. Required for resistance to oxidative stress. Involved in promoting infection by the microsporidian pathogen N.parisii, probably acting independently of its canonical partner, mml-1. The sequence is that of Max-like protein homolog 2 from Caenorhabditis elegans.